The chain runs to 275 residues: 2,3,4,5-tetrahydropyridine-2,6-dicarboxylate N-succinyltransferase (275 aa).

Substrate-binding residues include Arg-106 and Asp-143.

This sequence belongs to the transferase hexapeptide repeat family. As to quaternary structure, homotrimer.

Its subcellular location is the cytoplasm. It carries out the reaction (S)-2,3,4,5-tetrahydrodipicolinate + succinyl-CoA + H2O = (S)-2-succinylamino-6-oxoheptanedioate + CoA. The protein operates within amino-acid biosynthesis; L-lysine biosynthesis via DAP pathway; LL-2,6-diaminopimelate from (S)-tetrahydrodipicolinate (succinylase route): step 1/3. This is 2,3,4,5-tetrahydropyridine-2,6-dicarboxylate N-succinyltransferase from Paraburkholderia xenovorans (strain LB400).